A 606-amino-acid chain; its full sequence is Acetylcholinesterase (606 aa).

Residues 1–28 (MPSCQPGKMPAPWPWWLQLLLCIPSCVA) form the signal peptide. A disulfide bond links cysteine 98 and cysteine 125. The active-site Acyl-ester intermediate is the serine 231. Cysteine 285 and cysteine 296 are oxidised to a cystine. Asparagine 289 is a glycosylation site (N-linked (GlcNAc...) asparagine). The active-site Charge relay system is glutamate 358. N-linked (GlcNAc...) asparagine glycosylation is present at asparagine 374. Cysteine 433 and cysteine 552 form a disulfide bridge. Histidine 471 (charge relay system) is an active-site residue. Asparagine 484 is a glycosylation site (N-linked (GlcNAc...) asparagine).

Belongs to the type-B carboxylesterase/lipase family. Isoform S is monomeric. Isoform T can form oligomers, including collagen-tailed forms. The N-terminus is blocked. As to expression, liver and muscle contain both isoform T and isoform S. Venom gland predominantly contains isoform S.

It is found in the synapse. The protein localises to the secreted. It localises to the cell membrane. It catalyses the reaction acetylcholine + H2O = choline + acetate + H(+). With respect to regulation, inhibited by active site inhibitors: edrophonium, trimethyl-(m-acetamidopheny1)-ammonium iodide, and trimethyl-(p-acetarnidopheny1)-ammonium iodide. Inhibited by both active and peripheral site inhibitors: decamethonium, and BW284c51. Inhibited by peripheral site inhibitors: snake acetylcholinesterase fasciculin-2, propidium, gallamine, D-tubocurarine, and tacrine. Also inhibited by antibodies Elec410 and Fab410. In muscle, it terminates signal transduction at the neuromuscular junction by rapid hydrolysis of the acetylcholine released into the synaptic cleft. In liver, its function is unclear: it could serve as a safeguard against any diffusion of acetylcholine from synapses into the circulation. In venom, its toxic role is unclear: it could result in less musculatory control by rapidly hydrolyzing acetylcholine, or that it works synergistically with alkaline phosphatase (ALP) in paralyzing prey through hypotension. This Bungarus fasciatus (Banded krait) protein is Acetylcholinesterase (ACHE).